We begin with the raw amino-acid sequence, 281 residues long: 18S rRNA (guanine-N(7))-methyltransferase (281 aa).

Residues 212–231 (LPKGLTESQDADQASESMFT) are compositionally biased toward polar residues. The segment at 212 to 281 (LPKGLTESQD…YTGRKRKPRF (70 aa)) is disordered. The span at 242-256 (RDLVKKSREWVLEKK) shows a compositional bias: basic and acidic residues.

The protein belongs to the class I-like SAM-binding methyltransferase superfamily. BUD23/WBSCR22 family. As to quaternary structure, heterodimer with TRMT112; this heterodimerization is necessary for the metabolic stability and activity of the catalytic subunit BUD23. Interacts with GRIP1. Post-translationally, may be ubiquitinated and targeted to degradation in response to pro-inflammatory cytokine signaling.

Its subcellular location is the nucleus. It is found in the nucleoplasm. The protein localises to the cytoplasm. It localises to the perinuclear region. It carries out the reaction a guanosine in 18S rRNA + S-adenosyl-L-methionine = an N(7)-methylguanosine in 18S rRNA + S-adenosyl-L-homocysteine. Its function is as follows. S-adenosyl-L-methionine-dependent methyltransferase that specifically methylates the N(7) position of a guanine in 18S rRNA. Requires the methyltransferase adapter protein TRM112 for full rRNA methyltransferase activity. Involved in the pre-rRNA processing steps leading to small-subunit rRNA production independently of its RNA-modifying catalytic activity. Important for biogenesis end export of the 40S ribosomal subunit independent on its methyltransferase activity. Locus-specific steroid receptor coactivator. Potentiates transactivation by glucocorticoid (NR3C1), mineralocorticoid (NR3C2), androgen (AR) and progesterone (PGR) receptors. Required for the maintenance of open chromatin at the TSC22D3/GILZ locus to facilitate NR3C1 loading on the response elements. Required for maintenance of dimethylation on histone H3 'Lys-79' (H3K79me2), although direct histone methyltransferase activity is not observed in vitro. This chain is 18S rRNA (guanine-N(7))-methyltransferase, found in Mus musculus (Mouse).